The chain runs to 61 residues: Small ribosomal subunit protein uS14B (61 aa).

Zn(2+)-binding residues include C24, C27, C40, and C43.

The protein belongs to the universal ribosomal protein uS14 family. Zinc-binding uS14 subfamily. As to quaternary structure, part of the 30S ribosomal subunit. Contacts proteins S3 and S10. The cofactor is Zn(2+).

Its function is as follows. Binds 16S rRNA, required for the assembly of 30S particles and may also be responsible for determining the conformation of the 16S rRNA at the A site. This chain is Small ribosomal subunit protein uS14B, found in Cutibacterium acnes (strain DSM 16379 / KPA171202) (Propionibacterium acnes).